A 65-amino-acid chain; its full sequence is Small ribosomal subunit protein bS21 (65 aa).

Residues 46–57 (RLKRSRSKRRAQ) show a composition bias toward basic residues. The disordered stretch occupies residues 46–65 (RLKRSRSKRRAQRANEERNS).

It belongs to the bacterial ribosomal protein bS21 family.

This chain is Small ribosomal subunit protein bS21, found in Chlorobaculum tepidum (strain ATCC 49652 / DSM 12025 / NBRC 103806 / TLS) (Chlorobium tepidum).